Consider the following 243-residue polypeptide: Protein HUA2 (243 aa).

Its subcellular location is the cytoplasm. May have a role in actin patch assembly. The sequence is that of Protein HUA2 (HUA2) from Saccharomyces cerevisiae (strain ATCC 204508 / S288c) (Baker's yeast).